Here is a 141-residue protein sequence, read N- to C-terminus: Hemoglobin subunit alpha-D (141 aa).

One can recognise a Globin domain in the interval 1-141 (MLTEDEKQLI…VSAVLAEKYR (141 aa)). Positions 58 and 87 each coordinate heme b.

It belongs to the globin family. As to quaternary structure, heterotetramer of two alpha-D chains and two beta chains. As to expression, red blood cells.

Involved in oxygen transport from the lung to the various peripheral tissues. The polypeptide is Hemoglobin subunit alpha-D (HBAD) (Chelonoidis carbonarius (Red-footed tortoise)).